The primary structure comprises 199 residues: Dephospho-CoA kinase (199 aa).

The region spanning 3 to 199 (ILGLTGSIGM…EVVKMPQRRA (197 aa)) is the DPCK domain. 11 to 16 (GMGKST) is an ATP binding site.

This sequence belongs to the CoaE family.

It is found in the cytoplasm. The catalysed reaction is 3'-dephospho-CoA + ATP = ADP + CoA + H(+). It participates in cofactor biosynthesis; coenzyme A biosynthesis; CoA from (R)-pantothenate: step 5/5. Functionally, catalyzes the phosphorylation of the 3'-hydroxyl group of dephosphocoenzyme A to form coenzyme A. This is Dephospho-CoA kinase from Bradyrhizobium diazoefficiens (strain JCM 10833 / BCRC 13528 / IAM 13628 / NBRC 14792 / USDA 110).